The following is a 357-amino-acid chain: F-box only protein 25 (357 aa).

The tract at residues 1–83 (MPFLGQDWRS…DTAAHSFYRE (83 aa)) is interaction with beta-actin. The region spanning 224–271 (GLTLSDLPLHMLNNILYRFSDGWDIVTLGQVTPTLYMLSEDRRLWKRL) is the F-box domain.

Part of a SCF (SKP1-cullin-F-box) protein ligase complex consisting of FBXO25, SKP1, CUL1 and RBX1. Interacts directly with SKP1 and CUL1. Interacts (via C-terminus) with actin (via N-terminus).

It is found in the nucleus. Its pathway is protein modification; protein ubiquitination. Functionally, substrate-recognition component of the SCF (SKP1-CUL1-F-box protein)-type E3 ubiquitin ligase complex. May play a role in accumulation of expanded polyglutamine (polyQ) protein huntingtin (HTT). The protein is F-box only protein 25 (Fbxo25) of Rattus norvegicus (Rat).